Reading from the N-terminus, the 335-residue chain is Homeobox protein DBX1 (335 aa).

2 disordered regions span residues 56–102 (RSIP…LSPA) and 240–335 (KERE…ITVS). Residues 83 to 95 (GSPGSGSRRGSSP) are compositionally biased toward low complexity. A DNA-binding region (homeobox) is located at residues 181–240 (GMLRRAVFSDVQRKALEKTFQKQKYISKPDRKKLASKLGLKDSQVKIWFQNRRMKWRNSK). Low complexity predominate over residues 299–317 (GPLPASPAHSSSPGKPSDF). A compositionally biased stretch (acidic residues) spans 318–335 (SDSDEDEEGEEDEEITVS).

This sequence belongs to the H2.0 homeobox family.

The protein resides in the nucleus. Could have a role in patterning the central nervous system during embryogenesis. Has a key role in regulating the distinct phenotypic features that distinguish two major classes of ventral interneurons, V0 and V1 neurons. Regulates the transcription factor profile, neurotransmitter phenotype, intraspinal migratory path and axonal trajectory of V0 neurons, features that differentiate them from an adjacent set of V1 neurons. This Rattus norvegicus (Rat) protein is Homeobox protein DBX1 (Dbx1).